The following is a 525-amino-acid chain: Erythropoietin receptor (525 aa).

Positions 1 to 32 (MGAPSSLLFSTAHWRTVPFLLAFWVLLSTGTA) are cleaved as a signal peptide. Over 33 to 249 (EDPTMTPEFL…TIATIIDLRL (217 aa)) the chain is Extracellular. Cysteine 58 and cysteine 68 are joined by a disulfide. Asparagine 77, asparagine 100, asparagine 149, and asparagine 185 each carry an N-linked (GlcNAc...) asparagine glycan. A disulfide bond links cysteine 91 and cysteine 107. The region spanning 146–246 (PPLNVTVKEK…APITIATIID (101 aa)) is the Fibronectin type-III domain. Residues 232 to 236 (WSDWT) carry the WSXWS motif motif. The helical transmembrane segment at 250-270 (LLLLSIAIFVALIAGVGVYIF) threads the bilayer. Topologically, residues 271–525 (MRHGMYLKHK…NFLAPIYSQS (255 aa)) are cytoplasmic. The Box 1 motif signature appears at 281–289 (VWPQVPTPE). Disordered regions lie at residues 434 to 459 (APRMEHERHRVSRENSVSSDGKQSIP) and 492 to 513 (LDMSSSGEHSPPPSPNFYQNSP). Residues 447–459 (ENSVSSDGKQSIP) show a composition bias toward polar residues. Residues 487–492 (LKYAYL) carry the ITIM motif motif.

The protein belongs to the type I cytokine receptor family. Type 1 subfamily. As to expression, expressed in the ventral blood island from stage 28 through to stage 36. Expressed in the circulating blood by stage 40. In the adult, highly expressed in peripheral blood cells including immature erythrocytes and basophils, and moderately expressed in the hematopoietic organs: liver, kidney and spleen. Expressed at a low level in adult brain.

It is found in the cell membrane. Functionally, receptor for erythropoietin. Mediates erythropoietin-induced erythroblast proliferation and differentiation. The polypeptide is Erythropoietin receptor (Xenopus laevis (African clawed frog)).